Reading from the N-terminus, the 583-residue chain is Estrogen receptor (583 aa).

The tract at residues Met1–Phe138 is modulating. NR C4-type zinc fingers lie at residues Cys139–Cys159 and Cys175–Cys199. A DNA-binding region (nuclear receptor) is located at residues Cys139–Met204. Positions Met205–Met265 are hinge. The disordered stretch occupies residues Glu220–Asn263. In terms of domain architecture, NR LBD spans Pro266–His501. Residues Pro506–Pro583 are disordered. The segment covering Ala539–Ser551 has biased composition (low complexity).

It belongs to the nuclear hormone receptor family. NR3 subfamily. As to quaternary structure, binds DNA as a homodimer. Can form a heterodimer with ER-beta.

The protein localises to the nucleus. Functionally, the steroid hormones and their receptors are involved in the regulation of eukaryotic gene expression and affect cellular proliferation and differentiation in target tissues. In Oreochromis aureus (Israeli tilapia), this protein is Estrogen receptor (esr1).